Here is a 99-residue protein sequence, read N- to C-terminus: Large ribosomal subunit protein uL23 (99 aa).

The protein belongs to the universal ribosomal protein uL23 family. As to quaternary structure, part of the 50S ribosomal subunit. Contacts protein L29, and trigger factor when it is bound to the ribosome.

Functionally, one of the early assembly proteins it binds 23S rRNA. One of the proteins that surrounds the polypeptide exit tunnel on the outside of the ribosome. Forms the main docking site for trigger factor binding to the ribosome. This Stenotrophomonas maltophilia (strain R551-3) protein is Large ribosomal subunit protein uL23.